The chain runs to 122 residues: Large ribosomal subunit protein uL14 (122 aa).

This sequence belongs to the universal ribosomal protein uL14 family. Part of the 50S ribosomal subunit. Forms a cluster with proteins L3 and L19. In the 70S ribosome, L14 and L19 interact and together make contacts with the 16S rRNA in bridges B5 and B8.

Functionally, binds to 23S rRNA. Forms part of two intersubunit bridges in the 70S ribosome. The sequence is that of Large ribosomal subunit protein uL14 from Mesomycoplasma hyopneumoniae (strain 232) (Mycoplasma hyopneumoniae).